Consider the following 30-residue polypeptide: Cycloviolacin-O9 (30 aa).

A cross-link (cyclopeptide (Gly-Asn)) is located at residues 1 to 30 (GIPCGESCVWIPCLTSAVGCSCKSKVCYRN). 3 disulfide bridges follow: Cys-4-Cys-20, Cys-8-Cys-22, and Cys-13-Cys-27.

This is a cyclic peptide.

Probably participates in a plant defense mechanism. This Viola odorata (Sweet violet) protein is Cycloviolacin-O9.